Reading from the N-terminus, the 171-residue chain is Small ribosomal subunit protein uS5 (171 aa).

The 64-residue stretch at 16–79 folds into the S5 DRBM domain; that stretch reads LIEKIVFINR…ERARKDMALV (64 aa).

The protein belongs to the universal ribosomal protein uS5 family. As to quaternary structure, part of the 30S ribosomal subunit. Contacts proteins S4 and S8.

In terms of biological role, with S4 and S12 plays an important role in translational accuracy. Functionally, located at the back of the 30S subunit body where it stabilizes the conformation of the head with respect to the body. The polypeptide is Small ribosomal subunit protein uS5 (Desulfotalea psychrophila (strain LSv54 / DSM 12343)).